The sequence spans 157 residues: Crossover junction endodeoxyribonuclease RuvC (157 aa).

Residues Asp7, Glu67, and Asp139 contribute to the active site. Mg(2+)-binding residues include Asp7, Glu67, and Asp139.

This sequence belongs to the RuvC family. In terms of assembly, homodimer which binds Holliday junction (HJ) DNA. The HJ becomes 2-fold symmetrical on binding to RuvC with unstacked arms; it has a different conformation from HJ DNA in complex with RuvA. In the full resolvosome a probable DNA-RuvA(4)-RuvB(12)-RuvC(2) complex forms which resolves the HJ. Requires Mg(2+) as cofactor.

It localises to the cytoplasm. It catalyses the reaction Endonucleolytic cleavage at a junction such as a reciprocal single-stranded crossover between two homologous DNA duplexes (Holliday junction).. The RuvA-RuvB-RuvC complex processes Holliday junction (HJ) DNA during genetic recombination and DNA repair. Endonuclease that resolves HJ intermediates. Cleaves cruciform DNA by making single-stranded nicks across the HJ at symmetrical positions within the homologous arms, yielding a 5'-phosphate and a 3'-hydroxyl group; requires a central core of homology in the junction. The consensus cleavage sequence is 5'-(A/T)TT(C/G)-3'. Cleavage occurs on the 3'-side of the TT dinucleotide at the point of strand exchange. HJ branch migration catalyzed by RuvA-RuvB allows RuvC to scan DNA until it finds its consensus sequence, where it cleaves and resolves the cruciform DNA. The protein is Crossover junction endodeoxyribonuclease RuvC of Prochlorococcus marinus (strain AS9601).